Consider the following 148-residue polypeptide: UPF0179 protein Mevan_0979 (148 aa).

It belongs to the UPF0179 family.

This is UPF0179 protein Mevan_0979 from Methanococcus vannielii (strain ATCC 35089 / DSM 1224 / JCM 13029 / OCM 148 / SB).